A 952-amino-acid chain; its full sequence is Ent-kaur-16-ene synthase (952 aa).

The Mg(2+) site is built by aspartate 668, glutamate 672, asparagine 848, aspartate 849, serine 852, and aspartate 856. A DEXXE motif motif is present at residues 668–672 (DEYME).

It belongs to the terpene synthase family. Mg(2+) serves as cofactor.

It carries out the reaction ent-copalyl diphosphate = ent-kaur-16-ene + diphosphate. It catalyses the reaction (2E,6E,10E)-geranylgeranyl diphosphate = ent-copalyl diphosphate. Its pathway is plant hormone biosynthesis; gibberellin biosynthesis. In terms of biological role, catalyzes the conversion of geranylgeranyl diphosphate to the gibberellin precursor ent-kaurene diphosphate in a two step process. The sequence is that of Ent-kaur-16-ene synthase (cps) from Fusarium fujikuroi (Bakanae and foot rot disease fungus).